Consider the following 293-residue polypeptide: Undecaprenyl-diphosphatase (293 aa).

The next 8 membrane-spanning stretches (helical) occupy residues 3-23, 43-63, 85-105, 109-129, 178-198, 203-223, 238-258, and 269-289; these read IALA…EFLP, KGKI…CWEF, ANVV…GKWI, LFNP…ILLA, FALV…MLFG, VATE…TVYE, IFAV…RWLL, and FAWY…SGLV.

This sequence belongs to the UppP family.

Its subcellular location is the cell inner membrane. The enzyme catalyses di-trans,octa-cis-undecaprenyl diphosphate + H2O = di-trans,octa-cis-undecaprenyl phosphate + phosphate + H(+). Its function is as follows. Catalyzes the dephosphorylation of undecaprenyl diphosphate (UPP). Confers resistance to bacitracin. This Cupriavidus necator (strain ATCC 17699 / DSM 428 / KCTC 22496 / NCIMB 10442 / H16 / Stanier 337) (Ralstonia eutropha) protein is Undecaprenyl-diphosphatase.